Here is a 487-residue protein sequence, read N- to C-terminus: Cobyric acid synthase (487 aa).

The GATase cobBQ-type domain occupies 248-435 (VLKVIVPVLP…LHGLFEGSQS (188 aa)). Cysteine 329 serves as the catalytic Nucleophile. Histidine 427 is an active-site residue.

It belongs to the CobB/CobQ family. CobQ subfamily.

Its pathway is cofactor biosynthesis; adenosylcobalamin biosynthesis. Catalyzes amidations at positions B, D, E, and G on adenosylcobyrinic A,C-diamide. NH(2) groups are provided by glutamine, and one molecule of ATP is hydrogenolyzed for each amidation. The polypeptide is Cobyric acid synthase (Pseudomonas entomophila (strain L48)).